The primary structure comprises 353 residues: Alanine racemase (353 aa).

The active-site Proton acceptor; specific for D-alanine is lysine 33. At lysine 33 the chain carries N6-(pyridoxal phosphate)lysine. Position 129 (arginine 129) interacts with substrate. Tyrosine 250 serves as the catalytic Proton acceptor; specific for L-alanine. Methionine 298 is a binding site for substrate.

It belongs to the alanine racemase family. Pyridoxal 5'-phosphate serves as cofactor.

It carries out the reaction L-alanine = D-alanine. The protein operates within amino-acid biosynthesis; D-alanine biosynthesis; D-alanine from L-alanine: step 1/1. Catalyzes the interconversion of L-alanine and D-alanine. May also act on other amino acids. This Aromatoleum aromaticum (strain DSM 19018 / LMG 30748 / EbN1) (Azoarcus sp. (strain EbN1)) protein is Alanine racemase (alr).